We begin with the raw amino-acid sequence, 138 residues long: Cysteine desulfuration protein SufE (138 aa).

Cys-51 serves as the catalytic Cysteine persulfide intermediate.

This sequence belongs to the SufE family. As to quaternary structure, homodimer. Interacts with SufS.

It localises to the cytoplasm. It participates in cofactor biosynthesis; iron-sulfur cluster biosynthesis. Functionally, participates in cysteine desulfuration mediated by SufS. Cysteine desulfuration mobilizes sulfur from L-cysteine to yield L-alanine and constitutes an essential step in sulfur metabolism for biosynthesis of a variety of sulfur-containing biomolecules. Functions as a sulfur acceptor for SufS, by mediating the direct transfer of the sulfur atom from the S-sulfanylcysteine of SufS, an intermediate product of cysteine desulfuration process. This Sodalis glossinidius (strain morsitans) protein is Cysteine desulfuration protein SufE.